The primary structure comprises 393 residues: Sedoheptulose-1,7-bisphosphatase, chloroplastic (393 aa).

Cysteine 115 and cysteine 120 are joined by a disulfide. Mg(2+) is bound by residues aspartate 126, glutamate 155, aspartate 176, leucine 178, and aspartate 179. Residues aspartate 179–serine 182, tyrosine 290, and lysine 320 each bind substrate. Mg(2+) is bound at residue glutamate 326.

Belongs to the FBPase class 1 family. As to quaternary structure, homodimer. The cofactor is Mg(2+).

The protein resides in the plastid. Its subcellular location is the chloroplast. The enzyme catalyses D-sedoheptulose 1,7-bisphosphate + H2O = D-sedoheptulose 7-phosphate + phosphate. Its pathway is carbohydrate biosynthesis; Calvin cycle. The polypeptide is Sedoheptulose-1,7-bisphosphatase, chloroplastic (Triticum aestivum (Wheat)).